The chain runs to 486 residues: Sensor protein PhoQ (486 aa).

The Cytoplasmic portion of the chain corresponds to Met1 to Arg16. Residues Phe17–Leu37 form a helical membrane-spanning segment. Residues Ile38–Trp194 lie on the Periplasmic side of the membrane. Residues Asp151 and Asp152 each contribute to the a divalent metal cation site. The chain crosses the membrane as a helical span at residues Phe195–Trp215. Residues Trp215–Asp266 enclose the HAMP domain. Residues Trp216–Glu486 are Cytoplasmic-facing. Positions Asp274 to His480 constitute a Histidine kinase domain. Position 277 is a phosphohistidine; by autocatalysis (His277). Mg(2+) is bound at residue Asn385. Residues Asn385–Tyr393, Asp415–Ile420, and Arg434–Leu446 each bind ATP. Gln442 serves as a coordination point for Mg(2+).

Homodimer; probably dimerizes via the cytoplasmic domain. Probably interacts with MgrB in the periplasm, altering its activity and that of downstream effector PhoP.

The protein localises to the cell inner membrane. It catalyses the reaction ATP + protein L-histidine = ADP + protein N-phospho-L-histidine.. With respect to regulation, acetyl-CoA acts as a non-competitive inhibitor of the PhoQ autokinase activity. Feedback inhibited by MgrB, which seems to bind PhoQ, altering its activity and that of downstream effector PhoP. Its function is as follows. Member of the two-component regulatory system PhoP/PhoQ involved in adaptation to low Mg(2+) environments and the control of acid resistance genes. In low periplasmic Mg(2+), PhoQ functions as a membrane-associated protein kinase that undergoes autophosphorylation and subsequently transfers the phosphate to PhoP, resulting in the expression of PhoP-activated genes (PAG) and repression of PhoP-repressed genes (PRG). In high periplasmic Mg(2+), acts as a protein phosphatase that dephosphorylates phospho-PhoP, resulting in the repression of PAG and may lead to expression of some PRG. PhoP-regulated transcription is redox-sensitive, being activated when the periplasm becomes more reducing (deletion of dsbA/dsbB, or treatment with dithiothreitol). MgrB acts between DsbA/DsbB and PhoP/PhoQ in this pathway; the 2 periplasmic Cys residues of MgrB are required for its action on PhoQ, which then acts on PhoP. Mediates magnesium influx to the cytosol by activation of mgtA. Promotes expression of the two-component regulatory system rstA/rstB and transcription of the hemL, mgrB, nagA, slyB, vboR and yrbL genes. The chain is Sensor protein PhoQ (phoQ) from Escherichia coli (strain K12).